Reading from the N-terminus, the 556-residue chain is Genetic interactor of prohibitins 3, mitochondrial (556 aa).

Residues 1–21 (MLNLCHALRGVRQFSCSVIVK) constitute a mitochondrion transit peptide. Residues 113–305 (ESTLNDILNY…LFDLPGYSTS (193 aa)) form the CP-type G domain.

This sequence belongs to the TRAFAC class YlqF/YawG GTPase family. GEP3 subfamily.

It localises to the mitochondrion. Interacts genetically with prohibitins and thus may be involved in the mitochondrial lipid metabolism. In Saccharomyces cerevisiae (strain YJM789) (Baker's yeast), this protein is Genetic interactor of prohibitins 3, mitochondrial (GEP3).